The following is a 126-amino-acid chain: Hydrogenase maturation factor HypA (126 aa).

Position 2 (His-2) interacts with Ni(2+). 4 residues coordinate Zn(2+): Cys-78, Cys-81, Cys-97, and Cys-100.

It belongs to the HypA/HybF family.

Its function is as follows. Involved in the maturation of [NiFe] hydrogenases. Required for nickel insertion into the metal center of the hydrogenase. This Methanococcus maripaludis (strain C7 / ATCC BAA-1331) protein is Hydrogenase maturation factor HypA.